A 37-amino-acid polypeptide reads, in one-letter code: Large ribosomal subunit protein bL36c (37 aa).

Belongs to the bacterial ribosomal protein bL36 family.

The protein resides in the plastid. Its subcellular location is the chloroplast. This Liriodendron tulipifera (Tuliptree) protein is Large ribosomal subunit protein bL36c.